Consider the following 246-residue polypeptide: Large ribosomal subunit protein uL30 (246 aa).

Belongs to the universal ribosomal protein uL30 family.

Its function is as follows. Binds to G-rich structures in 28S rRNA and in mRNAs. Plays a regulatory role in the translation apparatus; inhibits cell-free translation of mRNAs. This Dictyostelium discoideum (Social amoeba) protein is Large ribosomal subunit protein uL30 (rpl7).